Here is a 427-residue protein sequence, read N- to C-terminus: Transcription factor MYB98 (427 aa).

A Nuclear localization signal 1 motif is present at residues Thr-195–Ser-202. HTH myb-type domains lie at Lys-212–Ile-267 and Lys-268–Phe-318. 2 consecutive DNA-binding regions (H-T-H motif) follow at residues Trp-240–Leu-263 and Trp-291–Lys-314. A Nuclear localization signal 2 motif is present at residues Asn-361–Val-368.

As to expression, expressed at high levels in the synergid cells of the female gametophyte, and at lower levels in the endosperm of young seeds and the trichomes of young leaves and sepals.

It localises to the nucleus. Its function is as follows. Transcription factor that binds to the motif 5'-GTAACNT-3' in the promoter of target genes (e.g. DD11 and DD18) and promotes their expression within synergid cells (e.g. in the filiform apparatus) in ovules. Required for the formation of the filiform apparatus during synergid cell differentiation in the female gametophyte. Involved in pollen tube guidance to the micropyle. The polypeptide is Transcription factor MYB98 (Arabidopsis thaliana (Mouse-ear cress)).